The primary structure comprises 428 residues: Glutamate-1-semialdehyde 2,1-aminomutase 1 (428 aa).

Lys267 carries the N6-(pyridoxal phosphate)lysine modification.

The protein belongs to the class-III pyridoxal-phosphate-dependent aminotransferase family. HemL subfamily. Homodimer. The cofactor is pyridoxal 5'-phosphate.

The protein localises to the cytoplasm. The catalysed reaction is (S)-4-amino-5-oxopentanoate = 5-aminolevulinate. The protein operates within porphyrin-containing compound metabolism; protoporphyrin-IX biosynthesis; 5-aminolevulinate from L-glutamyl-tRNA(Glu): step 2/2. The chain is Glutamate-1-semialdehyde 2,1-aminomutase 1 from Staphylococcus aureus (strain Mu3 / ATCC 700698).